A 735-amino-acid chain; its full sequence is Alpha-adducin (735 aa).

Met1 carries the post-translational modification N-acetylmethionine. The span at 1 to 11 shows a compositional bias: low complexity; that stretch reads MNGDTRAAVVT. Residues 1–21 are disordered; sequence MNGDTRAAVVTSPPPTTAPHK. 3 positions are modified to phosphoserine: Ser12, Ser59, and Ser64. Residue Thr331 is modified to Phosphothreonine. Phosphoserine occurs at positions 334, 353, and 355. Thr358 carries the phosphothreonine modification. Phosphoserine occurs at positions 364, 366, 408, and 427. 2 disordered regions span residues 418–487 and 576–735; these read GHSF…AVPN and RREV…KSDS. Thr429 is subject to Phosphothreonine. Ser431 and Ser436 each carry phosphoserine. The segment covering 440–455 has biased composition (basic and acidic residues); it reads QQREKTRWLHSGRGDD. A Phosphothreonine; by ROCK2 modification is found at Thr445. A phosphoserine mark is found at Ser464 and Ser465. Thr480 carries the post-translational modification Phosphothreonine; by ROCK2. Position 481 is a phosphoserine; by PKA (Ser481). Residues 576–601 are compositionally biased toward basic and acidic residues; that stretch reads RREVERKQKGSEENLDETREQKEKSP. A phosphoserine mark is found at Ser586, Ser600, and Ser605. At Thr610 the chain carries Phosphothreonine. Residue Ser613 is modified to Phosphoserine. Thr614 is modified (phosphothreonine). Over residues 698 to 712 the composition is skewed to low complexity; sequence GSPMDPGSDGSPGKS. A phosphoserine mark is found at Ser705, Ser708, and Ser712. A compositionally biased stretch (basic residues) spans 713–735; that stretch reads PSKKKKKFRTPSFLKKSKKKSDS. Ser714 is modified (phosphoserine; by PKC). Residues 715 to 732 form an interaction with calmodulin region; sequence KKKKKFRTPSFLKKSKKK. The residue at position 724 (Ser724) is a Phosphoserine; by PKA and PKC.

The protein belongs to the aldolase class II family. Adducin subfamily. In terms of assembly, heterodimer of an alpha and a beta subunit or an alpha and a gamma subunit.

Its subcellular location is the cytoplasm. It is found in the cytoskeleton. The protein resides in the cell membrane. In terms of biological role, membrane-cytoskeleton-associated protein that promotes the assembly of the spectrin-actin network. Binds to calmodulin. This is Alpha-adducin (Add1) from Mus musculus (Mouse).